A 429-amino-acid polypeptide reads, in one-letter code: Glucose-1-phosphate adenylyltransferase (429 aa).

Alpha-D-glucose 1-phosphate is bound by residues tyrosine 116, glycine 181, 196 to 197 (EK), and serine 214.

This sequence belongs to the bacterial/plant glucose-1-phosphate adenylyltransferase family. In terms of assembly, homotetramer.

The catalysed reaction is alpha-D-glucose 1-phosphate + ATP + H(+) = ADP-alpha-D-glucose + diphosphate. It functions in the pathway glycan biosynthesis; glycogen biosynthesis. In terms of biological role, involved in the biosynthesis of ADP-glucose, a building block required for the elongation reactions to produce glycogen. Catalyzes the reaction between ATP and alpha-D-glucose 1-phosphate (G1P) to produce pyrophosphate and ADP-Glc. In Paramagnetospirillum magneticum (strain ATCC 700264 / AMB-1) (Magnetospirillum magneticum), this protein is Glucose-1-phosphate adenylyltransferase.